The primary structure comprises 216 residues: Ribosomal RNA small subunit methyltransferase G (216 aa).

S-adenosyl-L-methionine is bound by residues Gly81, Phe86, 130–131, and Arg144; that span reads AE.

Belongs to the methyltransferase superfamily. RNA methyltransferase RsmG family.

It localises to the cytoplasm. It catalyses the reaction guanosine(527) in 16S rRNA + S-adenosyl-L-methionine = N(7)-methylguanosine(527) in 16S rRNA + S-adenosyl-L-homocysteine. Functionally, specifically methylates the N7 position of guanine in position 527 of 16S rRNA. The polypeptide is Ribosomal RNA small subunit methyltransferase G (Rhodospirillum centenum (strain ATCC 51521 / SW)).